Reading from the N-terminus, the 241-residue chain is Large ribosomal subunit protein uL3 (241 aa).

Glutamine 157 bears the N5-methylglutamine mark.

Belongs to the universal ribosomal protein uL3 family. Part of the 50S ribosomal subunit. Forms a cluster with proteins L14 and L19. In terms of processing, methylated by PrmB.

One of the primary rRNA binding proteins, it binds directly near the 3'-end of the 23S rRNA, where it nucleates assembly of the 50S subunit. In Vesicomyosocius okutanii subsp. Calyptogena okutanii (strain HA), this protein is Large ribosomal subunit protein uL3.